Here is a 201-residue protein sequence, read N- to C-terminus: Adenylyl-sulfate kinase (201 aa).

35–42 is a binding site for ATP; sequence GLSGSGKS. The active-site Phosphoserine intermediate is Ser109.

This sequence belongs to the APS kinase family.

The catalysed reaction is adenosine 5'-phosphosulfate + ATP = 3'-phosphoadenylyl sulfate + ADP + H(+). It participates in sulfur metabolism; hydrogen sulfide biosynthesis; sulfite from sulfate: step 2/3. Functionally, catalyzes the synthesis of activated sulfate. The sequence is that of Adenylyl-sulfate kinase from Bacteroides thetaiotaomicron (strain ATCC 29148 / DSM 2079 / JCM 5827 / CCUG 10774 / NCTC 10582 / VPI-5482 / E50).